The chain runs to 382 residues: Gap junction alpha-1 protein (382 aa).

Residues 2–23 lie on the Cytoplasmic side of the membrane; the sequence is GDWSALGKLLDKVQAYSTAGGK. S5 is subject to Phosphoserine. A helical membrane pass occupies residues 24 to 44; that stretch reads VWLSVLFIFRILLLGTAVESA. Residues 45–76 are Extracellular-facing; that stretch reads WGDEQSAFRCNTQQPGCENVCYDKSFPISHVR. Intrachain disulfides connect C54/C192 and C187/C198. Residues 77–97 traverse the membrane as a helical segment; it reads FWVLQIIFVSVPTLLYLAHVF. Over 98–155 the chain is Cytoplasmic; the sequence is YVMRKEEKLNKKEEELKVAQTDGVNVEMHLKQIEIKKFKYGIEEHGKVKMRGGLLRTY. K144 participates in a covalent cross-link: Glycyl lysine isopeptide (Lys-Gly) (interchain with G-Cter in SUMO). The helical transmembrane segment at 156 to 176 threads the bilayer; it reads IISILFKSVFEVAFLLIQWYI. At 177–207 the chain is on the extracellular side; the sequence is YGFSLSAVYTCKRDPCPHQVDCFLSRPTEKT. A helical transmembrane segment spans residues 208-228; it reads IFIIFMLVVSLVSLALNIIEL. The Cytoplasmic portion of the chain corresponds to 229–382; that stretch reads FYVFFKGVKD…SRPRPDDLEI (154 aa). K237 is covalently cross-linked (Glycyl lysine isopeptide (Lys-Gly) (interchain with G-Cter in SUMO)). The segment at 244–382 is interaction with NOV; that stretch reads SDPYHATTGP…SRPRPDDLEI (139 aa). Residue Y247 is modified to Phosphotyrosine. Phosphoserine occurs at positions 255, 257, and 262. An interaction with UBQLN4 region spans residues 264–382; that stretch reads KYAYFNGCSS…SRPRPDDLEI (119 aa). S-nitrosocysteine is present on C271. A Phosphothreonine modification is found at T275. S306 and S314 each carry phosphoserine. The segment covering 317-332 has biased composition (polar residues); sequence QNRMGQAGSTISNSHA. Residues 317-382 form a disordered region; sequence QNRMGQAGST…SRPRPDDLEI (66 aa). Residue S325 is modified to Phosphoserine; by CK1. Residue T326 is modified to Phosphothreonine. A phosphoserine; by CK1 mark is found at S328 and S330. A phosphoserine mark is found at S344 and S365. Positions 362–374 are enriched in low complexity; the sequence is RPSSRASSRASSR. A Phosphoserine; by PKC/PRKCG and PKC/PRKCD modification is found at S368. A phosphoserine mark is found at S369 and S373.

It belongs to the connexin family. Alpha-type (group II) subfamily. As to quaternary structure, a connexon is composed of a hexamer of connexins. Interacts with SGSM3. Interacts with RIC1/CIP150. Interacts with CNST and CSNK1D. Interacts (via C-terminus) with TJP1. Interacts (via C-terminus) with SRC (via SH3 domain). Interacts (not ubiquitinated) with UBQLN4 (via UBA domain). Interacts with NOV. Interacts with TMEM65. Interacts with ANK3/ANKG and PKP2. Post-translationally, phosphorylation at Ser-325, Ser-328 and Ser-330 by CK1 modulates gap junction assembly. Phosphorylated at Ser-368 by PRKCG; phosphorylation induces disassembly of gap junction plaques and inhibition of gap junction activity. Phosphorylation at Ser-368 by PRKCD triggers its internalization into small vesicles leading to proteasome-mediated degradation. In terms of processing, sumoylated with SUMO1, SUMO2 and SUMO3, which may regulate the level of functional Cx43 gap junctions at the plasma membrane. May be desumoylated by SENP1 or SENP2. S-nitrosylation at Cys-271 is enriched at the muscle endothelial gap junction in arteries, it augments channel permeability and may regulate of smooth muscle cell to endothelial cell communication. Post-translationally, acetylated in the developing cortex; leading to delocalization from the cell membrane.

It is found in the cell membrane. The protein localises to the cell junction. Its subcellular location is the gap junction. The protein resides in the endoplasmic reticulum. Its function is as follows. Gap junction protein that acts as a regulator of bladder capacity. A gap junction consists of a cluster of closely packed pairs of transmembrane channels, the connexons, through which materials of low MW diffuse from one cell to a neighboring cell. May play a critical role in the physiology of hearing by participating in the recycling of potassium to the cochlear endolymph. Negative regulator of bladder functional capacity: acts by enhancing intercellular electrical and chemical transmission, thus sensitizing bladder muscles to cholinergic neural stimuli and causing them to contract. May play a role in cell growth inhibition through the regulation of NOV expression and localization. Plays an essential role in gap junction communication in the ventricles. The protein is Gap junction alpha-1 protein (GJA1) of Oryctolagus cuniculus (Rabbit).